Here is a 666-residue protein sequence, read N- to C-terminus: ATP synthase subunit alpha 2 (666 aa).

ATP is bound at residue 182–189; it reads GDRATGKT. Positions 527–666 are disordered; sequence MPAEDAAGDI…DAEAEARHKR (140 aa). Positions 545–590 are enriched in basic and acidic residues; it reads ARGDADRDADHGANREVSREVSPEASREVSREVSCEVSHEADRDAA. A compositionally biased stretch (low complexity) spans 591–601; it reads ADAARVAGRAP. Basic and acidic residues predominate over residues 623–641; sequence ADGDRASASRPRPDARGDA.

It belongs to the ATPase alpha/beta chains family. As to quaternary structure, F-type ATPases have 2 components, CF(1) - the catalytic core - and CF(0) - the membrane proton channel. CF(1) has five subunits: alpha(3), beta(3), gamma(1), delta(1), epsilon(1). CF(0) has three main subunits: a(1), b(2) and c(9-12). The alpha and beta chains form an alternating ring which encloses part of the gamma chain. CF(1) is attached to CF(0) by a central stalk formed by the gamma and epsilon chains, while a peripheral stalk is formed by the delta and b chains.

It is found in the cell inner membrane. The enzyme catalyses ATP + H2O + 4 H(+)(in) = ADP + phosphate + 5 H(+)(out). Functionally, produces ATP from ADP in the presence of a proton gradient across the membrane. The alpha chain is a regulatory subunit. This is ATP synthase subunit alpha 2 from Burkholderia pseudomallei (strain 1106a).